A 300-amino-acid chain; its full sequence is Chaperone protein dnaJ 50 (300 aa).

An N-terminal signal peptide occupies residues 1–27; sequence MAPPVTERWCLALILLFLSLFVQSSTA. The Lumenal portion of the chain corresponds to 28 to 122; that stretch reads IYCGAEDCYA…RAKYGHKSDP (95 aa). In terms of domain architecture, J spans 34–98; the sequence is DCYALLGVAQ…TTRAQYDYAI (65 aa). 2 N-linked (GlcNAc...) asparagine glycosylation sites follow: Asn46 and Asn88. The chain crosses the membrane as a helical span at residues 123-143; sequence RAVLVGLLVVLSAFQYLNNVA. Over 144-206 the chain is Cytoplasmic; that stretch reads RYNEAIATVK…LQIKGAEKPS (63 aa). A helical membrane pass occupies residues 207 to 227; sequence VWELLGVRFILLPYTIIKLLV. Residues 228 to 300 are Lumenal-facing; it reads WYSSWVWRYK…EMRKESKRRR (73 aa).

Expressed in leaves, flower buds and flowers.

The protein localises to the endoplasmic reticulum membrane. May play a role in protein folding in the endoplasmic reticulum. The protein is Chaperone protein dnaJ 50 (C50) of Arabidopsis thaliana (Mouse-ear cress).